We begin with the raw amino-acid sequence, 508 residues long: Maturase K (508 aa).

The protein belongs to the intron maturase 2 family. MatK subfamily.

Its subcellular location is the plastid. It localises to the chloroplast. Functionally, usually encoded in the trnK tRNA gene intron. Probably assists in splicing its own and other chloroplast group II introns. The polypeptide is Maturase K (Marathrum schiedeanum).